The following is a 470-amino-acid chain: Chitin deacetylase 1 (470 aa).

Residues 1 to 19 form the signal peptide; sequence MFTFAAFSALLISLAGVVA. N101 and N121 each carry an N-linked (GlcNAc...) asparagine glycan. A disulfide bridge links C155 with C363. Residues 159–358 enclose the NodB homology domain; it reads NVWGLSYDDG…VLANGTYQLK (200 aa). D166 serves as the catalytic Proton acceptor. D166 serves as a coordination point for acetate. Co(2+) contacts are provided by D167, H216, and H220. An acetate-binding site is contributed by Y257. H331 functions as the Proton donor in the catalytic mechanism. N-linked (GlcNAc...) asparagine glycans are attached at residues N352, N378, and N440. The interval 406–447 is disordered; that stretch reads EVSAPSEATGSTAAGSAASTTSGSGASASTGAASNTSSSGSG. The segment covering 408 to 447 has biased composition (low complexity); the sequence is SAPSEATGSTAAGSAASTTSGSGASASTGAASNTSSSGSG. S444 carries GPI-anchor amidated serine lipidation. The propeptide at 445 to 470 is removed in mature form; it reads GSGRSATMGGALIALAAVAVGMVYVA.

The protein belongs to the polysaccharide deacetylase family. Co(2+) serves as cofactor.

It is found in the secreted. The protein localises to the cell wall. The protein resides in the cell membrane. It carries out the reaction [(1-&gt;4)-N-acetyl-beta-D-glucosaminyl](n) + n H2O = chitosan + n acetate. In terms of biological role, hydrolyzes the N-acetamido groups of N-acetyl-D-glucosamine residues in chitin to form chitosan and acetate. Chitosan is required to anchor melanin to the cell wall, for maintenance of cell wall integrity, and for proper cytokinesis. Plays a major role in synthesizing cell wall chitosan during host infection; chitosan offers an advantage during infection as it is less readily detected than chitin by host immunosurveillance mechanisms. The protein is Chitin deacetylase 1 of Cryptococcus neoformans var. grubii serotype A (strain H99 / ATCC 208821 / CBS 10515 / FGSC 9487) (Filobasidiella neoformans var. grubii).